The chain runs to 282 residues: Pantothenate synthetase (282 aa).

Met26 to His33 provides a ligand contact to ATP. Catalysis depends on His33, which acts as the Proton donor. Gln57 is a (R)-pantoate binding site. Position 57 (Gln57) interacts with beta-alanine. Gly148 to Asp151 contacts ATP. Gln154 contacts (R)-pantoate. Leu185–Arg188 is an ATP binding site.

It belongs to the pantothenate synthetase family. As to quaternary structure, homodimer.

The protein localises to the cytoplasm. The catalysed reaction is (R)-pantoate + beta-alanine + ATP = (R)-pantothenate + AMP + diphosphate + H(+). Its pathway is cofactor biosynthesis; (R)-pantothenate biosynthesis; (R)-pantothenate from (R)-pantoate and beta-alanine: step 1/1. Catalyzes the condensation of pantoate with beta-alanine in an ATP-dependent reaction via a pantoyl-adenylate intermediate. This is Pantothenate synthetase from Paracidovorax citrulli (strain AAC00-1) (Acidovorax citrulli).